The primary structure comprises 308 residues: Secreted frizzled-related protein 1 (308 aa).

The signal sequence occupies residues 1 to 25 (MGGGRWAAAGALLALAAGLLAAGSA). An FZ domain is found at 47-163 (TKPPQCVDIP…FPEGDVCIAM (117 aa)). Intrachain disulfides connect Cys52–Cys115, Cys62–Cys108, Cys99–Cys134, Cys123–Cys160, and Cys127–Cys151. Residue Asn167 is glycosylated (N-linked (GlcNAc...) asparagine). 3 disulfides stabilise this stretch: Cys180–Cys250, Cys183–Cys252, and Cys197–Cys300. Positions 180 to 300 (CPPCDNELKS…FMKKMKNHEC (121 aa)) constitute an NTR domain.

The protein belongs to the secreted frizzled-related protein (sFRP) family. As to quaternary structure, interacts with WNT1, WNT2, WNT4, WNT8, MYOC and FRZD6. Highest levels in aortic endothelium, heart, spleen and eye. Lower levels in lung, brain and kidney. Weak expression in liver, skeletal muscle and the medial layer of the aorta. In the cortical brain, localized to neurons and small blood vessels. In the retina, localized to the inner and outer nuclear layers with high expression in the neuronal cell bodies. In the heart, restricted to myocytes. In lung, highest expression found in the epithelium of terminal bronchioles. In kidney, localized to the epithelium of collecting ducts of the medulla and, in spleen, expression restricted to the red pulp in cells associated with the sinuses.

It is found in the secreted. Its function is as follows. Soluble frizzled-related proteins (sFRPS) function as modulators of Wnt signaling through direct interaction with Wnts. They have a role in regulating cell growth and differentiation in specific cell types. SFRP1 decreases intracellular beta-catenin levels. Has antiproliferative effects on vascular cells, in vitro and in vivo, and can induce, in vivo, an angiogenic response. In vascular cell cycle, delays the G1 phase and entry into the S phase. In kidney development, inhibits tubule formation and bud growth in metanephroi. Inhibits WNT1/WNT4-mediated TCF-dependent transcription. The chain is Secreted frizzled-related protein 1 (SFRP1) from Bos taurus (Bovine).